Reading from the N-terminus, the 1156-residue chain is Protein hu-li tai shao (1156 aa).

Positions 1–36 are disordered; the sequence is MTEVEQPPQNGIDPTAGEDDDNSKARPADIEQDMRE. Over residues 22 to 36 the composition is skewed to basic and acidic residues; it reads NSKARPADIEQDMRE. S478 bears the Phosphoserine mark. Residues T480 and T498 each carry the phosphothreonine modification. A Phosphoserine modification is found at S603. Phosphotyrosine is present on Y608. Residues T609 and T611 each carry the phosphothreonine modification. S614 carries the post-translational modification Phosphoserine. Phosphotyrosine is present on Y627. At S630 the chain carries Phosphoserine. The disordered stretch occupies residues 897–956; that stretch reads FLPSNHALPKDTDANNRDQTDRERPEAEQEESFHCAGDSGIGDSTGRRPRLATTSNDSSI. Residues 904 to 929 are compositionally biased toward basic and acidic residues; the sequence is LPKDTDANNRDQTDRERPEAEQEESF.

Belongs to the aldolase class II family. Adducin subfamily. As to expression, isoform C is expressed in nurse cells. Isoform A is produced in the nurse cell but transported into the oocyte at stage 1, localizes to the oocyte cortex at stage 8 and to the anterior pole from day 9 onwards. Isoform B is expressed in the somatic follicle cells that surround the germline.

Its subcellular location is the cytoplasm. It is found in the cytoskeleton. It localises to the cell membrane. In terms of biological role, required for assembling actin at ring canals in developing egg chambers. Probably interacts with other developmental proteins involved in nurse cell/oocyte transport through the ring canals. Important for normal neuromotor function. This is Protein hu-li tai shao (hts) from Drosophila melanogaster (Fruit fly).